The following is a 116-amino-acid chain: MSKTNPRLSSLIADLKSAARSSGGAVWGDVAERLEKPRRTHAEVNLGRIERYAQEDETVVVPGKVLGSGVLQKDVTVAAVDFSGTAETKIDQVGEAVSLEQAIENNPEGSHVRVIR.

The protein belongs to the eukaryotic ribosomal protein eL18 family. In terms of assembly, part of the 50S ribosomal subunit. Interacts weakly with proteins L4 and L15. Has been cross-linked to L4.

Functionally, stabilizes the tertiary rRNA structure within the 23S rRNA domain (domain II) to which it binds. The sequence is that of Large ribosomal subunit protein eL18 (rpl18e) from Haloarcula marismortui (strain ATCC 43049 / DSM 3752 / JCM 8966 / VKM B-1809) (Halobacterium marismortui).